Consider the following 472-residue polypeptide: 3-isopropylmalate dehydratase large subunit (472 aa).

3 residues coordinate [4Fe-4S] cluster: C347, C407, and C410.

This sequence belongs to the aconitase/IPM isomerase family. LeuC type 1 subfamily. Heterodimer of LeuC and LeuD. Requires [4Fe-4S] cluster as cofactor.

The catalysed reaction is (2R,3S)-3-isopropylmalate = (2S)-2-isopropylmalate. The protein operates within amino-acid biosynthesis; L-leucine biosynthesis; L-leucine from 3-methyl-2-oxobutanoate: step 2/4. In terms of biological role, catalyzes the isomerization between 2-isopropylmalate and 3-isopropylmalate, via the formation of 2-isopropylmaleate. The sequence is that of 3-isopropylmalate dehydratase large subunit from Bacillus velezensis (strain DSM 23117 / BGSC 10A6 / LMG 26770 / FZB42) (Bacillus amyloliquefaciens subsp. plantarum).